The following is a 260-amino-acid chain: Adenosylcobinamide-GDP ribazoletransferase (260 aa).

The next 8 membrane-spanning stretches (helical) occupy residues 3-23 (APLW…LPAW), 36-56 (FAPW…LVLI), 60-80 (WPTS…SGGL), 108-128 (VGAS…ASLL), 133-153 (LAPL…LWAM), 180-200 (ALPA…LMIV), 206-226 (MVLM…PELL), and 239-259 (GASV…LLPA).

The protein belongs to the CobS family. Mg(2+) is required as a cofactor.

It is found in the cell inner membrane. It catalyses the reaction alpha-ribazole + adenosylcob(III)inamide-GDP = adenosylcob(III)alamin + GMP + H(+). It carries out the reaction alpha-ribazole 5'-phosphate + adenosylcob(III)inamide-GDP = adenosylcob(III)alamin 5'-phosphate + GMP + H(+). Its pathway is cofactor biosynthesis; adenosylcobalamin biosynthesis; adenosylcobalamin from cob(II)yrinate a,c-diamide: step 7/7. In terms of biological role, joins adenosylcobinamide-GDP and alpha-ribazole to generate adenosylcobalamin (Ado-cobalamin). Also synthesizes adenosylcobalamin 5'-phosphate from adenosylcobinamide-GDP and alpha-ribazole 5'-phosphate. The protein is Adenosylcobinamide-GDP ribazoletransferase of Prochlorococcus marinus (strain MIT 9313).